Reading from the N-terminus, the 395-residue chain is Axin-like protein 1 (395 aa).

The RGS domain maps to 4 to 132 (RSKTFSDRIL…TTTADVSNTW (129 aa)). The disordered stretch occupies residues 190–230 (QETKNSSETEEEKKKERSADPYGSDGFAPPPQSTQTHTLRN). Residues 194-208 (NSSETEEEKKKERSA) show a composition bias toward basic and acidic residues. One can recognise a DIX domain in the interval 301-386 (EIQKLTVELR…RITAICRMCP (86 aa)).

Interacts with bar-1, dsh-2, gsk-3, and mig-5.

Functionally, works in parallel with pry-1 in negatively regulating bar-1 signaling in vulval precursor cells and Q neuroblasts. Shown to have a role in excretory cell development. The protein is Axin-like protein 1 (axl-1) of Caenorhabditis briggsae.